The primary structure comprises 671 residues: UvrABC system protein B (671 aa).

In terms of domain architecture, Helicase ATP-binding spans 25–412; that stretch reads EGIDAGLAHQ…AGRVVEQVVR (388 aa). An ATP-binding site is contributed by 38–45; sequence GVTGSGKT. The short motif at 91 to 114 is the Beta-hairpin element; it reads YYDYYQPEAYVPSSDTFIEKDASI. Positions 429–595 constitute a Helicase C-terminal domain; that stretch reads QVDDLLSEIH…GVFKDVADIM (167 aa). Residues 600-624 are disordered; it reads VPGSRSKKRKGMAKAAEENARYENE. Residues 614–624 show a composition bias toward basic and acidic residues; sequence AAEENARYENE. In terms of domain architecture, UVR spans 632–667; sequence NKRIRQLEEKMYQLARDLEFEAAAQMRDEIGKLRER.

This sequence belongs to the UvrB family. In terms of assembly, forms a heterotetramer with UvrA during the search for lesions. Interacts with UvrC in an incision complex.

It localises to the cytoplasm. The UvrABC repair system catalyzes the recognition and processing of DNA lesions. A damage recognition complex composed of 2 UvrA and 2 UvrB subunits scans DNA for abnormalities. Upon binding of the UvrA(2)B(2) complex to a putative damaged site, the DNA wraps around one UvrB monomer. DNA wrap is dependent on ATP binding by UvrB and probably causes local melting of the DNA helix, facilitating insertion of UvrB beta-hairpin between the DNA strands. Then UvrB probes one DNA strand for the presence of a lesion. If a lesion is found the UvrA subunits dissociate and the UvrB-DNA preincision complex is formed. This complex is subsequently bound by UvrC and the second UvrB is released. If no lesion is found, the DNA wraps around the other UvrB subunit that will check the other stand for damage. This Pseudomonas savastanoi pv. phaseolicola (strain 1448A / Race 6) (Pseudomonas syringae pv. phaseolicola (strain 1448A / Race 6)) protein is UvrABC system protein B.